The following is a 506-amino-acid chain: D-alanine--D-alanyl carrier protein ligase (506 aa).

152 to 153 contributes to the ATP binding site; sequence TS. D197 contacts D-alanine. Residue 292–297 participates in ATP binding; that stretch reads NTYGPT. Residue V301 participates in D-alanine binding. ATP contacts are provided by residues D383, 395 to 398, and K494; that span reads YRGR. Residue K494 coordinates D-alanine.

It belongs to the ATP-dependent AMP-binding enzyme family. DltA subfamily.

The protein resides in the cytoplasm. The enzyme catalyses holo-[D-alanyl-carrier protein] + D-alanine + ATP = D-alanyl-[D-alanyl-carrier protein] + AMP + diphosphate. It functions in the pathway cell wall biogenesis; lipoteichoic acid biosynthesis. In terms of biological role, catalyzes the first step in the D-alanylation of lipoteichoic acid (LTA), the activation of D-alanine and its transfer onto the D-alanyl carrier protein (Dcp) DltC. In an ATP-dependent two-step reaction, forms a high energy D-alanyl-AMP intermediate, followed by transfer of the D-alanyl residue as a thiol ester to the phosphopantheinyl prosthetic group of the Dcp. D-alanylation of LTA plays an important role in modulating the properties of the cell wall in Gram-positive bacteria, influencing the net charge of the cell wall. This is D-alanine--D-alanyl carrier protein ligase from Lacticaseibacillus casei (strain BL23) (Lactobacillus casei).